The following is a 511-amino-acid chain: Type 2 DNA topoisomerase 6 subunit B-like (511 aa).

The segment at 398–485 is disordered; sequence DSAQGTEDAP…RALAPGRASL (88 aa). A compositionally biased stretch (polar residues) spans 408–422; it reads DNSSLELLADTSGQA. The span at 440 to 451 shows a compositional bias: low complexity; that stretch reads LRSARAPSPSEA. Residues 466–475 show a composition bias toward basic and acidic residues; sequence RGREHREAHG.

It belongs to the TOP6B-like family. As to quaternary structure, heterotetramer of SPO11 and 2 TOP6BL chains. Interacts with SPO11. Detected in lung, spleen,colon and in skeletal muscle. Expressed in the ovaries, Fallopian tubes and uterus.

It is found in the chromosome. Component of a topoisomerase 6 complex specifically required for meiotic recombination. Together with SPO11, mediates DNA cleavage that forms the double-strand breaks (DSB) that initiate meiotic recombination. The complex promotes relaxation of negative and positive supercoiled DNA and DNA decatenation through cleavage and ligation cycles. The polypeptide is Type 2 DNA topoisomerase 6 subunit B-like (Homo sapiens (Human)).